We begin with the raw amino-acid sequence, 152 residues long: Psoriasis susceptibility 1 candidate gene 1 protein (152 aa).

Residues 1-31 are compositionally biased toward polar residues; the sequence is MTCTDQKSHSQRALGTQTPALQGPQLLNTDP. A disordered region spans residues 1–42; sequence MTCTDQKSHSQRALGTQTPALQGPQLLNTDPSSEETRPPHVN.

Expressed in skin. Also found in heart, placenta, liver, skeletal muscle and pancreas.

This Homo sapiens (Human) protein is Psoriasis susceptibility 1 candidate gene 1 protein (PSORS1C1).